Consider the following 114-residue polypeptide: Fumarate reductase subunit D (114 aa).

3 consecutive transmembrane segments (helical) span residues 24-44 (VSAI…PFGL), 50-70 (LITF…TIFP), and 92-112 (GGFI…FAVI).

Belongs to the FrdD family. As to quaternary structure, part of an enzyme complex containing four subunits: a flavoprotein (FrdA), an iron-sulfur protein (FrdB), and two hydrophobic anchor proteins (FrdC and FrdD).

The protein resides in the cell inner membrane. Its function is as follows. Anchors the catalytic components of the fumarate reductase complex to the cell membrane, binds quinones. This Haemophilus influenzae (strain PittGG) protein is Fumarate reductase subunit D.